The chain runs to 619 residues: DNA mismatch repair protein MutL (619 aa).

Positions 358 to 401 (GGNQFARPSEAREAATRFSITSSREPAASGGSSGGASWPHAQPG) are disordered.

It belongs to the DNA mismatch repair MutL/HexB family.

In terms of biological role, this protein is involved in the repair of mismatches in DNA. It is required for dam-dependent methyl-directed DNA mismatch repair. May act as a 'molecular matchmaker', a protein that promotes the formation of a stable complex between two or more DNA-binding proteins in an ATP-dependent manner without itself being part of a final effector complex. In Klebsiella pneumoniae (strain 342), this protein is DNA mismatch repair protein MutL.